Consider the following 628-residue polypeptide: Biosynthetic arginine decarboxylase (628 aa).

At lysine 99 the chain carries N6-(pyridoxal phosphate)lysine. A substrate-binding site is contributed by 279 to 289; that stretch reads VDVGGGLGIDY.

Belongs to the Orn/Lys/Arg decarboxylase class-II family. SpeA subfamily. It depends on Mg(2+) as a cofactor. Requires pyridoxal 5'-phosphate as cofactor.

It carries out the reaction L-arginine + H(+) = agmatine + CO2. The protein operates within amine and polyamine biosynthesis; agmatine biosynthesis; agmatine from L-arginine: step 1/1. Catalyzes the biosynthesis of agmatine from arginine. In Xylella fastidiosa (strain M12), this protein is Biosynthetic arginine decarboxylase.